Here is a 355-residue protein sequence, read N- to C-terminus: Ubiquinone biosynthesis protein COQ4 homolog, mitochondrial (355 aa).

4 residues coordinate Zn(2+): His134, Asp135, His138, and Glu150.

It belongs to the COQ4 family. In terms of assembly, component of a multi-subunit COQ enzyme complex. Requires Zn(2+) as cofactor.

Its subcellular location is the mitochondrion inner membrane. It catalyses the reaction a 4-hydroxy-3-methoxy-5-(all-trans-polyprenyl)benzoate + H(+) = a 2-methoxy-6-(all-trans-polyprenyl)phenol + CO2. The protein operates within cofactor biosynthesis; ubiquinone biosynthesis. Lyase that catalyzes the C1-decarboxylation of 4-hydroxy-3-methoxy-5-(all-trans-polyprenyl)benzoic acid into 2-methoxy-6-(all-trans-polyprenyl)phenol during ubiquinone biosynthesis. The protein is Ubiquinone biosynthesis protein COQ4 homolog, mitochondrial of Plasmodium knowlesi (strain H).